A 149-amino-acid chain; its full sequence is Nucleoside diphosphate kinase (149 aa).

6 residues coordinate ATP: Lys9, Phe57, Arg85, Thr91, Arg102, and Asn112. The active-site Pros-phosphohistidine intermediate is the His115.

Belongs to the NDK family. The cofactor is Mg(2+).

The protein resides in the cytoplasm. The catalysed reaction is a 2'-deoxyribonucleoside 5'-diphosphate + ATP = a 2'-deoxyribonucleoside 5'-triphosphate + ADP. It catalyses the reaction a ribonucleoside 5'-diphosphate + ATP = a ribonucleoside 5'-triphosphate + ADP. Functionally, major role in the synthesis of nucleoside triphosphates other than ATP. The ATP gamma phosphate is transferred to the NDP beta phosphate via a ping-pong mechanism, using a phosphorylated active-site intermediate. This Methanosarcina acetivorans (strain ATCC 35395 / DSM 2834 / JCM 12185 / C2A) protein is Nucleoside diphosphate kinase.